We begin with the raw amino-acid sequence, 269 residues long: Formamidopyrimidine-DNA glycosylase (269 aa).

Residue Pro2 is the Schiff-base intermediate with DNA of the active site. Residue Glu3 is the Proton donor of the active site. The Proton donor; for beta-elimination activity role is filled by Lys57. Residues His90, Arg109, and Lys150 each contribute to the DNA site. The FPG-type zinc finger occupies 235 to 269; the sequence is FVYGRAGEPCRICGEQIESIKLGQRSTFFCRHCQY. The active-site Proton donor; for delta-elimination activity is Arg259.

Belongs to the FPG family. In terms of assembly, monomer. The cofactor is Zn(2+).

It carries out the reaction Hydrolysis of DNA containing ring-opened 7-methylguanine residues, releasing 2,6-diamino-4-hydroxy-5-(N-methyl)formamidopyrimidine.. It catalyses the reaction 2'-deoxyribonucleotide-(2'-deoxyribose 5'-phosphate)-2'-deoxyribonucleotide-DNA = a 3'-end 2'-deoxyribonucleotide-(2,3-dehydro-2,3-deoxyribose 5'-phosphate)-DNA + a 5'-end 5'-phospho-2'-deoxyribonucleoside-DNA + H(+). In terms of biological role, involved in base excision repair of DNA damaged by oxidation or by mutagenic agents. Acts as a DNA glycosylase that recognizes and removes damaged bases. Has a preference for oxidized purines, such as 7,8-dihydro-8-oxoguanine (8-oxoG). Has AP (apurinic/apyrimidinic) lyase activity and introduces nicks in the DNA strand. Cleaves the DNA backbone by beta-delta elimination to generate a single-strand break at the site of the removed base with both 3'- and 5'-phosphates. The protein is Formamidopyrimidine-DNA glycosylase of Photorhabdus laumondii subsp. laumondii (strain DSM 15139 / CIP 105565 / TT01) (Photorhabdus luminescens subsp. laumondii).